Consider the following 468-residue polypeptide: MTVHPPAVADETSPLLPSQDGPGHNGIVPAATKPKELQSSMSQVALLCCARAIDPLAFFTIFPFVNQMIADTAGIDEADVGFYSGIIESLFSVTQMMLMIPWARAADRMGRKPVLILSLAGLSVSSALFGFSRTLGQMVFFRCLAGTFGGTVVTVRVMISENSTPDTQARAFSYFSLANTIGTVIGPLLGGALCRPGGVFRHYPYALPTVAAGAFGVTVTVACLMFVNETRKPADHTPHETASPTWTSAKILRSQGVLPVLYIHGHSMMLAFAYTAVSPVFYFTSPRLGGYGFSPFYISLFLGGSGIAQTIWLVLVYPPLHKRLGTGNILRGLCFVWIIFLAATVGASVLHRHCEMVAFWILAPLALVLGSSVAMQLTAMQLALDSVSPSPAALGTLNAMSLAIISFLRAVAPAMFTSMYASTLKLSSPGFYTFWLVLGGLVLVLAFTLRWLPEQVEKAPRKLGRSSA.

The disordered stretch occupies residues 1 to 30; the sequence is MTVHPPAVADETSPLLPSQDGPGHNGIVPA. Transmembrane regions (helical) follow at residues 43–65, 80–100, 112–132, 135–155, 174–194, and 207–227; these read QVALLCCARAIDPLAFFTIFPFV, VGFYSGIIESLFSVTQMMLMI, KPVLILSLAGLSVSSALFGFS, LGQMVFFRCLAGTFGGTVVTV, YFSLANTIGTVIGPLLGGALC, and LPTVAAGAFGVTVTVACLMFV. The N-linked (GlcNAc...) asparagine glycan is linked to N228. The next 6 helical transmembrane spans lie at 257 to 277, 296 to 316, 329 to 349, 357 to 377, 387 to 407, and 429 to 449; these read VLPVLYIHGHSMMLAFAYTAV, FYISLFLGGSGIAQTIWLVLV, ILRGLCFVWIIFLAATVGASV, VAFWILAPLALVLGSSVAMQL, VSPSPAALGTLNAMSLAIISF, and PGFYTFWLVLGGLVLVLAFTL.

The protein belongs to the major facilitator superfamily.

Its subcellular location is the cell membrane. Functionally, efflux pump that might be required for efficient secretion of azaphilones. The chain is Efflux pump azaK from Aspergillus niger (strain ATCC 1015 / CBS 113.46 / FGSC A1144 / LSHB Ac4 / NCTC 3858a / NRRL 328 / USDA 3528.7).